The chain runs to 490 residues: Tegument protein VP16 (490 aa).

The segment at 12–35 (MNADGASPPPPRPAGGPKNTPAAP) is disordered. 4 positions are modified to phosphoserine: S18, S353, S411, and S452. A transcriptional activation region spans residues 411–490 (STAPPTDVSL…DALGIDEYGG (80 aa)).

Belongs to the herpesviridae tegument protein VP16 protein family. In terms of assembly, interacts with tegument protein VP22. Interacts with gH (via C-terminus). Interacts with the virion host shutoff protein (vhs). Interacts with VP11/12. Associates with the VP16-induced complex; binding to host HCFC1 activates VP16 for association with the octamer motif-binding host protein POU2F1, to form a multiprotein-DNA complex responsible for activating transcription of the viral immediate early genes. Interacts with host P-TEFb; this interaction recruits P-TEFb to the viral alpha-gene promoters and overcomes transcriptional inhibition by ICP22 and promotes transcription of IE genes.

It is found in the virion tegument. It localises to the host nucleus. In terms of biological role, in the early stage of viral replication, acts as a transcriptional activator of immediate-early (IE) gene products (alpha-genes), which is released by invading virions. Recruits P-TEFb to the viral alpha-gene promoters and overcomes transcriptional inhibition by ICP22 to promote transcription of IE genes. VP16-induced complex represents a regulatory switch: when it is on, it promotes IE-gene expression and thus lytic infection, and when it is off, it limits IE-gene transcription favoring latent infection. Acts as a key activator of lytic infection by initiating the lytic program through the assembly of the transcriptional regulatory VP16-induced complex composed of VP16 and two cellular factors, HCFC1 and POU2F1. This complex recognizes the core motif 'TAATGARAT' in alpha-gene promoters. In the late stage of viral replication, VP16, as a tegument, is involved in viral assembly. Functionally, may play a role in the aggregation of tegument proteins around nucleocapsids during virus morphogenesis. The polypeptide is Tegument protein VP16 (Human herpesvirus 1 (strain 17) (HHV-1)).